The sequence spans 67 residues: DNA-directed RNA polymerase subunit omega (67 aa).

It belongs to the RNA polymerase subunit omega family. The RNAP catalytic core consists of 2 alpha, 1 beta, 1 beta' and 1 omega subunit. When a sigma factor is associated with the core the holoenzyme is formed, which can initiate transcription.

The catalysed reaction is RNA(n) + a ribonucleoside 5'-triphosphate = RNA(n+1) + diphosphate. Its function is as follows. Promotes RNA polymerase assembly. Latches the N- and C-terminal regions of the beta' subunit thereby facilitating its interaction with the beta and alpha subunits. The protein is DNA-directed RNA polymerase subunit omega of Burkholderia multivorans (strain ATCC 17616 / 249).